A 352-amino-acid chain; its full sequence is Molybdenum import ATP-binding protein ModC (352 aa).

Residues 1-229 enclose the ABC transporter domain; that stretch reads MLELNFSQTL…SVMNPWLPKE (229 aa). Position 31–38 (31–38) interacts with ATP; that stretch reads GVSGAGKT. Residues 289–352 form the Mop domain; sequence QTSIRNVLRA…AQIKSVSITA (64 aa).

It belongs to the ABC transporter superfamily. Molybdate importer (TC 3.A.1.8) family. In terms of assembly, the complex is composed of two ATP-binding proteins (ModC), two transmembrane proteins (ModB) and a solute-binding protein (ModA).

The protein localises to the cell inner membrane. It catalyses the reaction molybdate(out) + ATP + H2O = molybdate(in) + ADP + phosphate + H(+). Part of the ABC transporter complex ModABC involved in molybdenum import. Responsible for energy coupling to the transport system. In Shigella flexneri, this protein is Molybdenum import ATP-binding protein ModC.